Reading from the N-terminus, the 86-residue chain is Large ribosomal subunit protein bL27c (86 aa).

The tract at residues 1-20 (MAHKKGSGSTRNGRDSNAQR) is disordered. The span at 7-19 (SGSTRNGRDSNAQ) shows a compositional bias: polar residues.

The protein belongs to the bacterial ribosomal protein bL27 family.

It localises to the plastid. Its subcellular location is the chloroplast. This Guillardia theta (Cryptophyte) protein is Large ribosomal subunit protein bL27c (rpl27).